The sequence spans 239 residues: Putative transcriptional regulator of 2-aminoethylphosphonate degradation operons (239 aa).

Positions isoleucine 8–glutamate 76 constitute an HTH gntR-type domain. The segment at residues glutamate 36–alanine 55 is a DNA-binding region (H-T-H motif).

The chain is Putative transcriptional regulator of 2-aminoethylphosphonate degradation operons (phnR) from Salmonella typhi.